A 142-amino-acid chain; its full sequence is Transcription antitermination protein NusB (142 aa).

Belongs to the NusB family.

Functionally, involved in transcription antitermination. Required for transcription of ribosomal RNA (rRNA) genes. Binds specifically to the boxA antiterminator sequence of the ribosomal RNA (rrn) operons. The sequence is that of Transcription antitermination protein NusB from Borreliella burgdorferi (strain ATCC 35210 / DSM 4680 / CIP 102532 / B31) (Borrelia burgdorferi).